A 533-amino-acid chain; its full sequence is Probable protein kinase UbiB (533 aa).

The chain crosses the membrane as a helical span at residues 24–44 (LILELPMLPWWLRLLGATLPW). The Protein kinase domain occupies 126-494 (RFEREPLASA…WKGSRHDWLG (369 aa)). ATP contacts are provided by residues 132–140 (LASASVAQV) and Lys-154. Catalysis depends on Asp-289, which acts as the Proton acceptor. Residues 510 to 530 (LGQQLEAWPAWVMLAGGVFLI) traverse the membrane as a helical segment.

Belongs to the ABC1 family. UbiB subfamily.

It is found in the cell inner membrane. It functions in the pathway cofactor biosynthesis; ubiquinone biosynthesis [regulation]. Its function is as follows. Is probably a protein kinase regulator of UbiI activity which is involved in aerobic coenzyme Q (ubiquinone) biosynthesis. This Pseudomonas aeruginosa (strain ATCC 15692 / DSM 22644 / CIP 104116 / JCM 14847 / LMG 12228 / 1C / PRS 101 / PAO1) protein is Probable protein kinase UbiB.